The chain runs to 312 residues: Zinc-finger homeodomain protein 9 (312 aa).

Residues 1–27 form a disordered region; the sequence is MLEVRSMDMTPKSPEPESETPTRIQPA. The residue at position 13 (S13) is a Phosphoserine. The ZF-HD dimerization-type; degenerate zinc-finger motif lies at 52 to 103; sequence YKECLKNHAAAIGGHALDGCGEFMPSPSSTPSDPTSLKCAACGCHRNFHRRE. Disordered stretches follow at residues 128–155 and 253–312; these read QPHHRHHPPPPLAPPLPRSPNSSSPPPI and FSGG…SSSS. The span at 136-155 shows a compositional bias: pro residues; that stretch reads PPPLAPPLPRSPNSSSPPPI. A DNA-binding region (homeobox) is located at residues 192–255; that stretch reads RKRFRTKFSS…NNKNSFKFSG (64 aa). S273 is subject to Phosphoserine.

In terms of assembly, homo- and heterodimer with other ZFHD proteins. Interacts with MIF3; this interaction prevents nuclear localization and DNA-binding to inhibit transcription regulation activity. Binds to ZHD1, ZHD2 and ZHD11. As to expression, mostly expressed in flowers, stems and inflorescence and, to a lower extent, in leaves and stems.

The protein resides in the nucleus. In terms of biological role, putative transcription factor. This chain is Zinc-finger homeodomain protein 9 (ZHD9), found in Arabidopsis thaliana (Mouse-ear cress).